The primary structure comprises 210 residues: 3-hexulose-6-phosphate synthase (210 aa).

It belongs to the HPS/KGPDC family. HPS subfamily.

It carries out the reaction D-ribulose 5-phosphate + formaldehyde = D-arabino-hex-3-ulose 6-phosphate. The protein operates within one-carbon metabolism; formaldehyde assimilation via RuMP pathway; D-fructose 6-phosphate from D-ribulose 5-phosphate and formaldehyde: step 1/2. Functionally, catalyzes the condensation of ribulose 5-phosphate with formaldehyde to form 3-hexulose 6-phosphate. Together with HxlB, may act as a formaldehyde detoxification system. This chain is 3-hexulose-6-phosphate synthase (hxlA), found in Bacillus subtilis (strain 168).